Consider the following 241-residue polypeptide: Glucosamine-6-phosphate deaminase (241 aa).

Aspartate 67 acts as the Proton acceptor; for enolization step in catalysis. The active-site For ring-opening step is the asparagine 136. Residue histidine 138 is the Proton acceptor; for ring-opening step of the active site. The active-site For ring-opening step is glutamate 143.

This sequence belongs to the glucosamine/galactosamine-6-phosphate isomerase family. NagB subfamily.

The enzyme catalyses alpha-D-glucosamine 6-phosphate + H2O = beta-D-fructose 6-phosphate + NH4(+). The protein operates within amino-sugar metabolism; N-acetylneuraminate degradation; D-fructose 6-phosphate from N-acetylneuraminate: step 5/5. Functionally, catalyzes the reversible isomerization-deamination of glucosamine 6-phosphate (GlcN6P) to form fructose 6-phosphate (Fru6P) and ammonium ion. The polypeptide is Glucosamine-6-phosphate deaminase (Halothermothrix orenii (strain H 168 / OCM 544 / DSM 9562)).